The primary structure comprises 514 residues: Sugar transport protein 11 (514 aa).

At 1–19 (MAGGAFIDESGHGGDYEGR) the chain is on the cytoplasmic side. The helical transmembrane segment at 20-40 (VTAFVMITCIVAAMGGLLFGY) threads the bilayer. Residues 41–82 (DIGISGGVISMEDFLTKFFPDVLRQMQNKRGRETEYCKYDNE) lie on the Extracellular side of the membrane. Residues 83–103 (LLTLFTSSLYLAALFASFLAS) traverse the membrane as a helical segment. Residues 104 to 112 (TITRLFGRK) lie on the Cytoplasmic side of the membrane. A helical membrane pass occupies residues 113–133 (VSMVIGSLAFLSGALLNGLAI). The Extracellular segment spans residues 134–137 (NLEM). A helical membrane pass occupies residues 138–158 (LIIGRLFLGVGVGFANQSVPL). The Cytoplasmic portion of the chain corresponds to 159–169 (YLSEMAPAKIR). A helical membrane pass occupies residues 170–190 (GALNIGFQLAITIGILAANIV). The Extracellular portion of the chain corresponds to 191-204 (NYVTPKLQNGIGWR). A helical membrane pass occupies residues 205–225 (LSLGLAGVPAVMMLVGCFFLP). Residues 226 to 290 (DTPNSILERG…RYRPQLTFCT (65 aa)) are Cytoplasmic-facing. Residues 291-311 (FIPFFQQLTGINVIMFYAPVL) form a helical membrane-spanning segment. The Extracellular portion of the chain corresponds to 312–320 (FKTIGFGND). The chain crosses the membrane as a helical span at residues 321–341 (ASLISAVITGLVNVLSTIVSI). Residues 342–350 (YSVDKFGRR) lie on the Cytoplasmic side of the membrane. Residues 351–371 (ALFLQGGFQMIVTQIAVGSMI) traverse the membrane as a helical segment. Residues 372–389 (GWKFGFNGEGNLSGVDAD) lie on the Extracellular side of the membrane. A helical membrane pass occupies residues 390–410 (IILALICLYVAGFAWSWGPLG). The Cytoplasmic segment spans residues 411–428 (WLVPSEICPLEIRSAGQS). A helical transmembrane segment spans residues 429–449 (LNVSVNMFFTFFIGQFFLTML). At 450–453 (CHMK) the chain is on the extracellular side. The helical transmembrane segment at 454 to 474 (FGLFYFFAGMVLIMTIFIYFL) threads the bilayer. Topologically, residues 475–514 (LPETKGVPIEEMGKVWKEHRYWGKYSNNDDGDDVDDDAYF) are cytoplasmic.

This sequence belongs to the major facilitator superfamily. Sugar transporter (TC 2.A.1.1) family. In terms of tissue distribution, specifically expressed in germinating pollen and pollen tube (at protein level).

Its subcellular location is the cell membrane. With respect to regulation, inhibited by uncouplers such as 2,4-dinitrophenol and carbonyl cyanide-m-chlorophenyl-hydrazone. Functionally, mediates an active uptake of hexoses, probably by sugar/hydrogen symport. Can transport glucose, galactose, mannose, xylose and 3-O-methylglucose, but not fructose and ribose. The polypeptide is Sugar transport protein 11 (STP11) (Arabidopsis thaliana (Mouse-ear cress)).